We begin with the raw amino-acid sequence, 359 residues long: Histidinol-phosphate aminotransferase (359 aa).

Lys-217 is modified (N6-(pyridoxal phosphate)lysine).

Belongs to the class-II pyridoxal-phosphate-dependent aminotransferase family. Histidinol-phosphate aminotransferase subfamily. As to quaternary structure, homodimer. The cofactor is pyridoxal 5'-phosphate.

The catalysed reaction is L-histidinol phosphate + 2-oxoglutarate = 3-(imidazol-4-yl)-2-oxopropyl phosphate + L-glutamate. It participates in amino-acid biosynthesis; L-histidine biosynthesis; L-histidine from 5-phospho-alpha-D-ribose 1-diphosphate: step 7/9. The protein is Histidinol-phosphate aminotransferase of Citrobacter koseri (strain ATCC BAA-895 / CDC 4225-83 / SGSC4696).